Reading from the N-terminus, the 503-residue chain is Maturase K (503 aa).

Belongs to the intron maturase 2 family. MatK subfamily.

Its subcellular location is the plastid. The protein localises to the chloroplast. In terms of biological role, usually encoded in the trnK tRNA gene intron. Probably assists in splicing its own and other chloroplast group II introns. This Rosa canina (Dog rose) protein is Maturase K.